The following is a 148-amino-acid chain: Prefoldin subunit alpha (148 aa).

This sequence belongs to the prefoldin subunit alpha family. As to quaternary structure, heterohexamer of two alpha and four beta subunits.

The protein localises to the cytoplasm. Functionally, molecular chaperone capable of stabilizing a range of proteins. Seems to fulfill an ATP-independent, HSP70-like function in archaeal de novo protein folding. The chain is Prefoldin subunit alpha (pfdA) from Pyrococcus horikoshii (strain ATCC 700860 / DSM 12428 / JCM 9974 / NBRC 100139 / OT-3).